The following is a 453-amino-acid chain: Bifunctional protein GlmU (453 aa).

Positions 1-226 (MTLDVVILAA…ALEVEGVNNR (226 aa)) are pyrophosphorylase. UDP-N-acetyl-alpha-D-glucosamine contacts are provided by residues 8–11 (LAAG), Lys-22, Gln-73, 78–79 (GT), 99–101 (YGD), Gly-136, Glu-151, Asn-166, and Asn-224. Asp-101 contributes to the Mg(2+) binding site. Residue Asn-224 participates in Mg(2+) binding. Positions 227-247 (SQMAALERAYQRDRAERLLTE) are linker. An N-acetyltransferase region spans residues 248–453 (GVALADPARF…AGWKRPRKSS (206 aa)). Residues Arg-330 and Lys-348 each coordinate UDP-N-acetyl-alpha-D-glucosamine. His-360 (proton acceptor) is an active-site residue. Positions 363 and 374 each coordinate UDP-N-acetyl-alpha-D-glucosamine. Acetyl-CoA contacts are provided by residues Ala-377, 383 to 384 (NY), Ser-402, Ala-420, and Arg-437.

It in the N-terminal section; belongs to the N-acetylglucosamine-1-phosphate uridyltransferase family. This sequence in the C-terminal section; belongs to the transferase hexapeptide repeat family. As to quaternary structure, homotrimer. Requires Mg(2+) as cofactor.

It is found in the cytoplasm. The catalysed reaction is alpha-D-glucosamine 1-phosphate + acetyl-CoA = N-acetyl-alpha-D-glucosamine 1-phosphate + CoA + H(+). It catalyses the reaction N-acetyl-alpha-D-glucosamine 1-phosphate + UTP + H(+) = UDP-N-acetyl-alpha-D-glucosamine + diphosphate. It participates in nucleotide-sugar biosynthesis; UDP-N-acetyl-alpha-D-glucosamine biosynthesis; N-acetyl-alpha-D-glucosamine 1-phosphate from alpha-D-glucosamine 6-phosphate (route II): step 2/2. Its pathway is nucleotide-sugar biosynthesis; UDP-N-acetyl-alpha-D-glucosamine biosynthesis; UDP-N-acetyl-alpha-D-glucosamine from N-acetyl-alpha-D-glucosamine 1-phosphate: step 1/1. The protein operates within bacterial outer membrane biogenesis; LPS lipid A biosynthesis. Functionally, catalyzes the last two sequential reactions in the de novo biosynthetic pathway for UDP-N-acetylglucosamine (UDP-GlcNAc). The C-terminal domain catalyzes the transfer of acetyl group from acetyl coenzyme A to glucosamine-1-phosphate (GlcN-1-P) to produce N-acetylglucosamine-1-phosphate (GlcNAc-1-P), which is converted into UDP-GlcNAc by the transfer of uridine 5-monophosphate (from uridine 5-triphosphate), a reaction catalyzed by the N-terminal domain. The protein is Bifunctional protein GlmU of Chromohalobacter salexigens (strain ATCC BAA-138 / DSM 3043 / CIP 106854 / NCIMB 13768 / 1H11).